The following is a 79-amino-acid chain: RNA-binding protein KhpA (79 aa).

The KH domain maps to 32-79; that stretch reads FLEYHLNLDQSDVGRVIGRKGRTISAIRTIVYSVPTEYKKVRIVIDEK.

This sequence belongs to the KhpA RNA-binding protein family. Forms a complex with KhpB. KhpA and KhpB colocalize throughout the cell cycle, with some increase at midcell in dividing cells.

It localises to the cytoplasm. In terms of biological role, a probable RNA chaperone. Forms a complex with KhpB which presumably binds to about 170 cellular RNAs (mRNA, tRNA intergenic RNA and sRNAs); the proteins alone each bind the same set of RNAs. A mutation in this gene suppresses the requirement for PBP2b (penA, a transpeptidase) in peripheral peptidoglycan (PG) synthesis. Probably plays a role in PG homeostasis and regulating peripheral PG synthesis. This is RNA-binding protein KhpA from Streptococcus pneumoniae serotype 2 (strain D39 / NCTC 7466).